A 317-amino-acid chain; its full sequence is Olfactory receptor 51Q1 (317 aa).

Over 1 to 27 the chain is Extracellular; the sequence is MSQVTNTTQEGIYFILTDIPGFEASHI. Residue N6 is glycosylated (N-linked (GlcNAc...) asparagine). Residues 28–48 form a helical membrane-spanning segment; the sequence is WISIPVCCLYTISIMGNTTIL. The Cytoplasmic portion of the chain corresponds to 49–56; the sequence is TVIRTEPS. A helical membrane pass occupies residues 57–77; it reads VHQRMYLFLSMLALTDLGLTL. The Extracellular segment spans residues 78 to 101; it reads TTLPTVMQLLWFNVRRISSEACFA. C99 and C191 form a disulfide bridge. The helical transmembrane segment at 102 to 122 threads the bilayer; that stretch reads QFFFLHGFSFMESSVLLAMSV. Topologically, residues 123 to 141 are cytoplasmic; that stretch reads DCYVAICCPLHYASILTNE. The chain crosses the membrane as a helical span at residues 142 to 162; sequence VIGRTGLAIICCCVLAVLPSL. The Extracellular segment spans residues 163–198; that stretch reads FLLKRLPFCHSHLLSRSYCLHQDMIRLVCADIRLNS. The helical transmembrane segment at 199-219 threads the bilayer; that stretch reads WYGFALALLIIIVDPLLIVIS. Residues 220 to 239 lie on the Cytoplasmic side of the membrane; that stretch reads YTLILKNILGTATWAERLRA. A helical membrane pass occupies residues 240–260; sequence LNNCLSHILAVLVLYIPMVGV. The Extracellular portion of the chain corresponds to 261–275; it reads SMTHRFAKHASPLVH. A helical transmembrane segment spans residues 276–296; sequence VIMANIYLLAPPVMNPIIYSV. The Cytoplasmic portion of the chain corresponds to 297–317; the sequence is KNKQIQWGMLNFLSLKNMHSR.

The protein belongs to the G-protein coupled receptor 1 family.

It localises to the cell membrane. Odorant receptor. The chain is Olfactory receptor 51Q1 (OR51Q1) from Homo sapiens (Human).